Here is a 252-residue protein sequence, read N- to C-terminus: Imidazole glycerol phosphate synthase subunit HisF (252 aa).

Catalysis depends on residues aspartate 11 and aspartate 130.

Belongs to the HisA/HisF family. Heterodimer of HisH and HisF.

Its subcellular location is the cytoplasm. It catalyses the reaction 5-[(5-phospho-1-deoxy-D-ribulos-1-ylimino)methylamino]-1-(5-phospho-beta-D-ribosyl)imidazole-4-carboxamide + L-glutamine = D-erythro-1-(imidazol-4-yl)glycerol 3-phosphate + 5-amino-1-(5-phospho-beta-D-ribosyl)imidazole-4-carboxamide + L-glutamate + H(+). The protein operates within amino-acid biosynthesis; L-histidine biosynthesis; L-histidine from 5-phospho-alpha-D-ribose 1-diphosphate: step 5/9. IGPS catalyzes the conversion of PRFAR and glutamine to IGP, AICAR and glutamate. The HisF subunit catalyzes the cyclization activity that produces IGP and AICAR from PRFAR using the ammonia provided by the HisH subunit. This chain is Imidazole glycerol phosphate synthase subunit HisF, found in Dictyoglomus thermophilum (strain ATCC 35947 / DSM 3960 / H-6-12).